The chain runs to 249 residues: Probable transcriptional regulatory protein Sare_1779 (249 aa).

Belongs to the TACO1 family.

The protein localises to the cytoplasm. This is Probable transcriptional regulatory protein Sare_1779 from Salinispora arenicola (strain CNS-205).